A 99-amino-acid polypeptide reads, in one-letter code: Large ribosomal subunit protein uL23c (99 aa).

This sequence belongs to the universal ribosomal protein uL23 family. As to quaternary structure, part of the 50S ribosomal subunit.

The protein resides in the plastid. The protein localises to the chloroplast. Binds to 23S rRNA. This Emiliania huxleyi (Coccolithophore) protein is Large ribosomal subunit protein uL23c (rpl23).